A 359-amino-acid chain; its full sequence is MMP endo-(1,4)-3-O-methyl-alpha-D-mannosidase (359 aa).

As to quaternary structure, monomer in solution.

It catalyses the reaction Endohydrolysis of 3-O-methyl-alpha-D-mannosyl-(1-&gt;4)-3-O-methyl-D-mannose linkages within (1,4)-3-O-methyl-alpha-D-mannnan substrates.. In terms of biological role, hydrolase involved in the biosynthesis of 3-O-methylmannose polysaccharides (MMP), which are intracellular polymethylated polysaccharides implicated in the modulation of fatty acid metabolism in non-tuberculous mycobacteria. Highly specific hydrolase that catalyzes the internal cleavage of MMP. Is able to hydrolyze purified MMP into distinct lower order oligomannosides but does not cleave acylated or deacylated forms of 6-O-methylglucose lipopolysaccharide (MGLP), beta-mannans, synthetic 4alpha-oligomannosides or its own reaction products. Products were identified as four distinct oligomannosides differing in the number of mannose units (4 to 8) and methylation pattern (free or methylated C1-OH). Might serve as a recycling enzyme that hydrolyzes mature MMP into defined-size smaller oligomannosides that are, in turn, substrates for ManT and MeT1 activities for further processing into new daughter MMP chains. The chain is MMP endo-(1,4)-3-O-methyl-alpha-D-mannosidase from Mycolicibacterium hassiacum (strain DSM 44199 / CIP 105218 / JCM 12690 / 3849) (Mycobacterium hassiacum).